A 395-amino-acid chain; its full sequence is 8-amino-7-oxononanoate synthase (395 aa).

R24 serves as a coordination point for substrate. 111–112 (GF) contacts pyridoxal 5'-phosphate. H136 is a substrate binding site. Residues S184, 209 to 212 (DDAH), and 240 to 243 (TLSK) contribute to the pyridoxal 5'-phosphate site. K243 is modified (N6-(pyridoxal phosphate)lysine). T357 contributes to the substrate binding site.

It belongs to the class-II pyridoxal-phosphate-dependent aminotransferase family. BioF subfamily. As to quaternary structure, homodimer. Requires pyridoxal 5'-phosphate as cofactor.

The catalysed reaction is 6-carboxyhexanoyl-[ACP] + L-alanine + H(+) = (8S)-8-amino-7-oxononanoate + holo-[ACP] + CO2. Its pathway is cofactor biosynthesis; biotin biosynthesis. Its function is as follows. Catalyzes the decarboxylative condensation of pimeloyl-[acyl-carrier protein] and L-alanine to produce 8-amino-7-oxononanoate (AON), [acyl-carrier protein], and carbon dioxide. This chain is 8-amino-7-oxononanoate synthase, found in Alkaliphilus metalliredigens (strain QYMF).